The chain runs to 287 residues: Phosphatidylserine decarboxylase proenzyme (287 aa).

Residues aspartate 90, histidine 147, and serine 253 each act as charge relay system; for autoendoproteolytic cleavage activity in the active site. Residue serine 253 is the Schiff-base intermediate with substrate; via pyruvic acid; for decarboxylase activity of the active site. The residue at position 253 (serine 253) is a Pyruvic acid (Ser); by autocatalysis.

It belongs to the phosphatidylserine decarboxylase family. PSD-B subfamily. Prokaryotic type I sub-subfamily. As to quaternary structure, heterodimer of a large membrane-associated beta subunit and a small pyruvoyl-containing alpha subunit. Pyruvate is required as a cofactor. Post-translationally, is synthesized initially as an inactive proenzyme. Formation of the active enzyme involves a self-maturation process in which the active site pyruvoyl group is generated from an internal serine residue via an autocatalytic post-translational modification. Two non-identical subunits are generated from the proenzyme in this reaction, and the pyruvate is formed at the N-terminus of the alpha chain, which is derived from the carboxyl end of the proenzyme. The autoendoproteolytic cleavage occurs by a canonical serine protease mechanism, in which the side chain hydroxyl group of the serine supplies its oxygen atom to form the C-terminus of the beta chain, while the remainder of the serine residue undergoes an oxidative deamination to produce ammonia and the pyruvoyl prosthetic group on the alpha chain. During this reaction, the Ser that is part of the protease active site of the proenzyme becomes the pyruvoyl prosthetic group, which constitutes an essential element of the active site of the mature decarboxylase.

The protein resides in the cell membrane. The enzyme catalyses a 1,2-diacyl-sn-glycero-3-phospho-L-serine + H(+) = a 1,2-diacyl-sn-glycero-3-phosphoethanolamine + CO2. Its pathway is phospholipid metabolism; phosphatidylethanolamine biosynthesis; phosphatidylethanolamine from CDP-diacylglycerol: step 2/2. Catalyzes the formation of phosphatidylethanolamine (PtdEtn) from phosphatidylserine (PtdSer). This is Phosphatidylserine decarboxylase proenzyme from Aliivibrio fischeri (strain MJ11) (Vibrio fischeri).